Reading from the N-terminus, the 549-residue chain is Cytochrome bc1 complex cytochrome b subunit (549 aa).

Residues 45–65 (FLLGEIALYSFVVLLITGVYL) form a helical membrane-spanning segment. Residues His114 and His128 each contribute to the heme site. Transmembrane regions (helical) follow at residues 118 to 138 (ALMFAAAIMVHLARIFFTGAF), 146 to 166 (WVIGSLLLILAMFEGYFGYSL), and 189 to 209 (VIGTWLHWALFGGDFPGTILI). 2 residues coordinate heme: His216 and His231. 5 helical membrane-spanning segments follow: residues 217–237 (ILLLPGIILALIGLHLALVWF), 266–286 (SGAFFAAIVGVLGLMGGLLQI), 335–355 (PVWVAVIMGLVFVLLPAYPFL), 381–401 (IGAMAIAFYMVLTLAAMNDII), and 418–438 (IGMVILPPFVYFITYRWCIGL).

Belongs to the cytochrome b family. The cytochrome bc1 complex is composed of a cytochrome b (QcrB), the Rieske iron-sulfur protein (QcrA) and a diheme cytochrome c (QcrC) subunit. Heme serves as cofactor.

It localises to the cell membrane. The catalysed reaction is a quinol + 2 Fe(III)-[cytochrome c](out) = a quinone + 2 Fe(II)-[cytochrome c](out) + 2 H(+)(out). Its function is as follows. Cytochrome b subunit of the cytochrome bc1 complex, an essential component of the respiratory electron transport chain required for ATP synthesis. The bc1 complex catalyzes the oxidation of ubiquinol and the reduction of cytochrome c in the respiratory chain. The bc1 complex operates through a Q-cycle mechanism that couples electron transfer to generation of the proton gradient that drives ATP synthesis. The cytochrome b subunit contains two ubiquinol reactive sites: the oxidation (QP) site and the reduction (QN) site. This is Cytochrome bc1 complex cytochrome b subunit (qcrB) from Mycobacterium bovis (strain ATCC BAA-935 / AF2122/97).